The chain runs to 58 residues: Large ribosomal subunit protein eL37 (58 aa).

The span at 1 to 17 (MTGAGTPSQGKKNTTTH) shows a compositional bias: polar residues. Positions 1-26 (MTGAGTPSQGKKNTTTHTKCRRCGEK) are disordered. Residues Cys20, Cys23, Cys35, and Cys38 each coordinate Zn(2+). The C4-type zinc finger occupies 20 to 38 (CRRCGEKSYHTKKKVCSSC).

The protein belongs to the eukaryotic ribosomal protein eL37 family. It depends on Zn(2+) as a cofactor.

Binds to the 23S rRNA. The chain is Large ribosomal subunit protein eL37 from Halobacterium salinarum (strain ATCC 29341 / DSM 671 / R1).